A 305-amino-acid polypeptide reads, in one-letter code: Translation initiation factor eIF2B subunit alpha (305 aa).

Lysine 35 carries the N6-acetyllysine modification.

It belongs to the eIF-2B alpha/beta/delta subunits family. Component of the translation initiation factor 2B (eIF2B) complex which is a heterodecamer of two sets of five different subunits: alpha, beta, gamma, delta and epsilon. Subunits alpha, beta and delta comprise a regulatory subcomplex and subunits epsilon and gamma comprise a catalytic subcomplex. Within the complex, the hexameric regulatory complex resides at the center, with the two heterodimeric catalytic subcomplexes bound on opposite sides.

It is found in the cytoplasm. The protein resides in the cytosol. Its activity is regulated as follows. Activated by the chemical integrated stress response (ISR) inhibitor ISRIB which stimulates guanine nucleotide exchange factor activity for both phosphorylated and unphosphorylated eIF2. Its function is as follows. Acts as a component of the translation initiation factor 2B (eIF2B) complex, which catalyzes the exchange of GDP for GTP on eukaryotic initiation factor 2 (eIF2) gamma subunit. Its guanine nucleotide exchange factor activity is repressed when bound to eIF2 complex phosphorylated on the alpha subunit, thereby limiting the amount of methionyl-initiator methionine tRNA available to the ribosome and consequently global translation is repressed. The polypeptide is Translation initiation factor eIF2B subunit alpha (EIF2B1) (Macaca fascicularis (Crab-eating macaque)).